A 154-amino-acid chain; its full sequence is 17.6 kDa class I heat shock protein (154 aa).

Residues 40-154 (ENSAFVNTRV…SDVKPIEISG (115 aa)) form the sHSP domain.

This sequence belongs to the small heat shock protein (HSP20) family. Forms oligomeric structures.

Its subcellular location is the cytoplasm. The polypeptide is 17.6 kDa class I heat shock protein (HSP17.6-L) (Glycine max (Soybean)).